The sequence spans 78 residues: Defensin beta 136 (78 aa).

Positions 1–21 are cleaved as a signal peptide; the sequence is MNLCLSSLLFFLVILLPSGKG. Intrachain disulfides connect Cys33-Cys60, Cys40-Cys54, and Cys44-Cys61.

It belongs to the beta-defensin family.

It is found in the secreted. In terms of biological role, host defense peptide that exhibits antimicrobial and antifungal activity. Exhibits antimicrobial activity against E.coli, S.aureus and C.albicans (in vitro). Has high lipopolysaccharide (LPS)-binding affinity, and may thereby be involved in immunoregulation through LPS neutralization. This Pan troglodytes (Chimpanzee) protein is Defensin beta 136 (DEFB136).